The chain runs to 297 residues: HTH-type transcriptional regulator ArgP (297 aa).

In terms of domain architecture, HTH lysR-type spans 4-60; it reads PDYRTLQALDAVIRERGFERAAQKLCITQSAVSQRIKQLENMFGQPLLVRTVPPRPT. The segment at residues 21-40 is a DNA-binding region (H-T-H motif); the sequence is FERAAQKLCITQSAVSQRIK.

Belongs to the LysR transcriptional regulatory family. Homodimer.

Controls the transcription of genes involved in arginine and lysine metabolism. The chain is HTH-type transcriptional regulator ArgP from Escherichia fergusonii (strain ATCC 35469 / DSM 13698 / CCUG 18766 / IAM 14443 / JCM 21226 / LMG 7866 / NBRC 102419 / NCTC 12128 / CDC 0568-73).